Here is a 161-residue protein sequence, read N- to C-terminus: Lipoprotein signal peptidase (161 aa).

4 helical membrane passes run 8 to 28 (LKYFILAILIIAADLYTKYLA), 40 to 60 (ITSFFNLTLLYNHGAAFSLLS), 67 to 87 (QMIMFSTISLIAAIVLIYLII), and 91 to 111 (ITEKINLFSFALILGGALGNF). Catalysis depends on residues Asp122 and Asp140. Residues 136-156 (FNIADSAITCGVVILIAASLF) form a helical membrane-spanning segment.

Belongs to the peptidase A8 family.

It is found in the cell inner membrane. The enzyme catalyses Release of signal peptides from bacterial membrane prolipoproteins. Hydrolyzes -Xaa-Yaa-Zaa-|-(S,diacylglyceryl)Cys-, in which Xaa is hydrophobic (preferably Leu), and Yaa (Ala or Ser) and Zaa (Gly or Ala) have small, neutral side chains.. Its pathway is protein modification; lipoprotein biosynthesis (signal peptide cleavage). Functionally, this protein specifically catalyzes the removal of signal peptides from prolipoproteins. This Francisella tularensis subsp. tularensis (strain FSC 198) protein is Lipoprotein signal peptidase.